Consider the following 183-residue polypeptide: Large ribosomal subunit protein uL5 (183 aa).

This sequence belongs to the universal ribosomal protein uL5 family. As to quaternary structure, part of the 50S ribosomal subunit; part of the 5S rRNA/L5/L18/L25 subcomplex. Contacts the 5S rRNA and the P site tRNA. Forms a bridge to the 30S subunit in the 70S ribosome.

In terms of biological role, this is one of the proteins that bind and probably mediate the attachment of the 5S RNA into the large ribosomal subunit, where it forms part of the central protuberance. In the 70S ribosome it contacts protein S13 of the 30S subunit (bridge B1b), connecting the 2 subunits; this bridge is implicated in subunit movement. Contacts the P site tRNA; the 5S rRNA and some of its associated proteins might help stabilize positioning of ribosome-bound tRNAs. This is Large ribosomal subunit protein uL5 from Legionella pneumophila (strain Lens).